A 459-amino-acid chain; its full sequence is Polycomb protein mes-6 (459 aa).

WD repeat units follow at residues S146–V186, C192–H231, M305–E346, S370–P409, and V415–K454.

It belongs to the WD repeat ESC family. Interacts directly with the N-terminal domain of mes-2. Forms a heterotrimeric complex with mes-2 and mes-3. Does not interact with mes-4. In terms of tissue distribution, in adults, it is predominantly expressed in the germline, and weakly expressed in intestinal cells.

The protein localises to the nucleus. Polycomb group (PcG) protein. PcG proteins act by forming multiprotein complexes, which are required to maintain the transcriptionally repressive state of homeotic genes throughout development. In association with the nfya-1-NF-Y complex, may play a role in repressing the expression of the homeobox protein egl-5 in tissues such as the head. PcG proteins are not required to initiate repression, but to maintain it during later stages of development. The mes-2/mes-3/mes-6 complex may participate in the global inactivation of the X chromosomes in germline cells. The complex may act via methylation of histone H3 'Lys-27', rendering chromatin heritably changed in its expressibility. This complex is required to exclude mes-4 from the inactivated X-chromosomes in germline cells. Required for small-RNA-induced H3K27 trimethylation. This is Polycomb protein mes-6 from Caenorhabditis elegans.